The primary structure comprises 343 residues: 4-hydroxythreonine-4-phosphate dehydrogenase (343 aa).

Substrate is bound by residues His-141 and Thr-142. His-175, His-220, and His-275 together coordinate a divalent metal cation. Positions 283, 292, and 301 each coordinate substrate.

This sequence belongs to the PdxA family. As to quaternary structure, homodimer. Zn(2+) serves as cofactor. Mg(2+) is required as a cofactor. Requires Co(2+) as cofactor.

The protein localises to the cytoplasm. The enzyme catalyses 4-(phosphooxy)-L-threonine + NAD(+) = 3-amino-2-oxopropyl phosphate + CO2 + NADH. It functions in the pathway cofactor biosynthesis; pyridoxine 5'-phosphate biosynthesis; pyridoxine 5'-phosphate from D-erythrose 4-phosphate: step 4/5. In terms of biological role, catalyzes the NAD(P)-dependent oxidation of 4-(phosphooxy)-L-threonine (HTP) into 2-amino-3-oxo-4-(phosphooxy)butyric acid which spontaneously decarboxylates to form 3-amino-2-oxopropyl phosphate (AHAP). In Janthinobacterium sp. (strain Marseille) (Minibacterium massiliensis), this protein is 4-hydroxythreonine-4-phosphate dehydrogenase.